Here is a 248-residue protein sequence, read N- to C-terminus: MFRDGSLIPYLTAGDPSAKATLRFLLAIEEYSGAIELGIPFSDPIADGKTIQQSHFRALKGGFKLEHAFNIVREFRKHSDVPIVLMTYYNPVFRVGLREFIGKAKDSGVDGMLIVDLPVMHASEFLEVAREEGIKTVFLAAPNTPDERLKEIDKASTGFVYLISLYGTTGARDKIPETAFNLLKRAKRICKNKVAVGFGVSKREHVEMLLNAGANGVVVGSALINIIAEHGENAEEKLREKVRELAGL.

Catalysis depends on proton acceptor residues E36 and D47.

It belongs to the TrpA family. Tetramer of two alpha and two beta chains.

The enzyme catalyses (1S,2R)-1-C-(indol-3-yl)glycerol 3-phosphate + L-serine = D-glyceraldehyde 3-phosphate + L-tryptophan + H2O. It participates in amino-acid biosynthesis; L-tryptophan biosynthesis; L-tryptophan from chorismate: step 5/5. Functionally, the alpha subunit is responsible for the aldol cleavage of indoleglycerol phosphate to indole and glyceraldehyde 3-phosphate. In Pyrococcus abyssi (strain GE5 / Orsay), this protein is Tryptophan synthase alpha chain.